Here is a 633-residue protein sequence, read N- to C-terminus: uncharacterized protein (633 aa).

This is an uncharacterized protein from Acanthamoeba polyphaga mimivirus (APMV).